Consider the following 550-residue polypeptide: CTP synthase (550 aa).

The amidoligase domain stretch occupies residues 1 to 266; it reads MNVNYIFVTG…DEYICKYFNL (266 aa). S14 is a CTP binding site. S14 contributes to the UTP binding site. ATP contacts are provided by residues 15-20 and D72; that span reads SLGKGI. 2 residues coordinate Mg(2+): D72 and E140. CTP-binding positions include 147–149, 187–192, and K223; these read DIE and KTKPTQ. UTP contacts are provided by residues 187 to 192 and K223; that span reads KTKPTQ. A Glutamine amidotransferase type-1 domain is found at 291-546; sequence TIGIVGKYIR…INAAIQYQCK (256 aa). G353 provides a ligand contact to L-glutamine. Residue C380 is the Nucleophile; for glutamine hydrolysis of the active site. Residues 381-384, E404, and R474 contribute to the L-glutamine site; that span reads LGMQ. Active-site residues include H519 and E521.

The protein belongs to the CTP synthase family. Homotetramer.

It carries out the reaction UTP + L-glutamine + ATP + H2O = CTP + L-glutamate + ADP + phosphate + 2 H(+). It catalyses the reaction L-glutamine + H2O = L-glutamate + NH4(+). The catalysed reaction is UTP + NH4(+) + ATP = CTP + ADP + phosphate + 2 H(+). The protein operates within pyrimidine metabolism; CTP biosynthesis via de novo pathway; CTP from UDP: step 2/2. Its activity is regulated as follows. Allosterically activated by GTP, when glutamine is the substrate; GTP has no effect on the reaction when ammonia is the substrate. The allosteric effector GTP functions by stabilizing the protein conformation that binds the tetrahedral intermediate(s) formed during glutamine hydrolysis. Inhibited by the product CTP, via allosteric rather than competitive inhibition. Catalyzes the ATP-dependent amination of UTP to CTP with either L-glutamine or ammonia as the source of nitrogen. Regulates intracellular CTP levels through interactions with the four ribonucleotide triphosphates. The sequence is that of CTP synthase from Blochmanniella floridana.